The following is a 508-amino-acid chain: Amphoterin-induced protein 3 (508 aa).

A signal peptide spans 1–19 (MAWLVLLGLLLCMLGAGSG). Residues 20 to 383 (TSDLEGVLPP…PRPEPEAFNT (364 aa)) lie on the Extracellular side of the membrane. An LRRNT domain is found at 25-61 (GVLPPDPHNCPNKCVCAADVLSCAGRGLQDLPAALPA). 2 disulfide bridges follow: Cys34–Cys40 and Cys38–Cys47. LRR repeat units lie at residues 62–83 (TAAELDLSHNALKRLHPGWLAP), 86–107 (RLRALYLGYNKLDVLGRGVFTN), 110–131 (GLRILDLSSNLLRRLRTYDLDG), 134–155 (ELEKLLLFNNRLMHLDLDAFQG), 158–178 (MLSHLYLSCNELSSFSFNHLH), and 184–207 (RLRTLDLSSNWLGHVSVPELAALP). Asn107 carries N-linked (GlcNAc...) asparagine glycosylation. An LRRCT domain is found at 219 to 275 (NPLPCDCSLYHLLRRWHQRGLSALHDFEREYTCLAFKVAESRVRFFEHSRVFKNCSV). 3 cysteine pairs are disulfide-bonded: Cys223-Cys251, Cys225-Cys273, and Cys300-Cys352. N-linked (GlcNAc...) asparagine glycosylation is found at Asn272, Asn301, Asn362, and Asn368. In terms of domain architecture, Ig-like C2-type spans 279 to 370 (PGLELPEEEL…HNQTLEYNVS (92 aa)). Residues 384–404 (GFTTLLGCIVGLVLVLLYLFA) traverse the membrane as a helical segment. Topologically, residues 405-508 (PPCRGCCRCC…STGSEGLMMS (104 aa)) are cytoplasmic.

This sequence belongs to the immunoglobulin superfamily. AMIGO family. In terms of assembly, binds AMIGO1 or AMIGO2.

The protein localises to the membrane. Its function is as follows. May mediate heterophilic cell-cell interaction. May contribute to signal transduction through its intracellular domain. This Rattus norvegicus (Rat) protein is Amphoterin-induced protein 3.